The following is a 397-amino-acid chain: CCA-adding enzyme (397 aa).

The ATP site is built by Gly-32 and Arg-35. CTP-binding residues include Gly-32 and Arg-35. Mg(2+)-binding residues include Asp-45 and Asp-47. ATP-binding residues include Arg-116, Asp-159, Arg-162, Arg-165, and Arg-168. The CTP site is built by Arg-116, Asp-159, Arg-162, Arg-165, and Arg-168.

The protein belongs to the tRNA nucleotidyltransferase/poly(A) polymerase family. Bacterial CCA-adding enzyme type 3 subfamily. As to quaternary structure, homodimer. Mg(2+) is required as a cofactor.

The enzyme catalyses a tRNA precursor + 2 CTP + ATP = a tRNA with a 3' CCA end + 3 diphosphate. The catalysed reaction is a tRNA with a 3' CCA end + 2 CTP + ATP = a tRNA with a 3' CCACCA end + 3 diphosphate. Functionally, catalyzes the addition and repair of the essential 3'-terminal CCA sequence in tRNAs without using a nucleic acid template. Adds these three nucleotides in the order of C, C, and A to the tRNA nucleotide-73, using CTP and ATP as substrates and producing inorganic pyrophosphate. tRNA 3'-terminal CCA addition is required both for tRNA processing and repair. Also involved in tRNA surveillance by mediating tandem CCA addition to generate a CCACCA at the 3' terminus of unstable tRNAs. While stable tRNAs receive only 3'-terminal CCA, unstable tRNAs are marked with CCACCA and rapidly degraded. This Latilactobacillus sakei subsp. sakei (strain 23K) (Lactobacillus sakei subsp. sakei) protein is CCA-adding enzyme.